Here is a 301-residue protein sequence, read N- to C-terminus: Uricase-2 isozyme 2 (301 aa).

Catalysis depends on charge relay system residues K17 and T63. Urate-binding residues include T63, D64, F165, R182, V237, Q238, and N257. Catalysis depends on H259, which acts as the Charge relay system. A Microbody targeting signal motif is present at residues 299–301; sequence SKL.

Belongs to the uricase family.

Its subcellular location is the peroxisome. It carries out the reaction urate + O2 + H2O = 5-hydroxyisourate + H2O2. It functions in the pathway purine metabolism; urate degradation; (S)-allantoin from urate: step 1/3. In terms of biological role, catalyzes the oxidation of uric acid to 5-hydroxyisourate, which is further processed to form (S)-allantoin. The sequence is that of Uricase-2 isozyme 2 from Canavalia lineata (Beach bean).